Here is a 147-residue protein sequence, read N- to C-terminus: Small ribosomal subunit protein bS6 (147 aa).

The tract at residues 107-147 (KEGRERKARPARAERRDDTEAEDLSDEEGVEAEDFEEEQGV) is disordered. Residues 125–147 (TEAEDLSDEEGVEAEDFEEEQGV) are compositionally biased toward acidic residues.

Belongs to the bacterial ribosomal protein bS6 family.

Its function is as follows. Binds together with bS18 to 16S ribosomal RNA. This Cellvibrio japonicus (strain Ueda107) (Pseudomonas fluorescens subsp. cellulosa) protein is Small ribosomal subunit protein bS6.